A 165-amino-acid chain; its full sequence is Fibrinogen-binding protein (165 aa).

The first 29 residues, 1–29 (MKNKLIAKSLLTIAAIGITTTTIASTADA), serve as a signal peptide directing secretion.

As to quaternary structure, interacts with host fibrinogen alpha chain/FGA. Interacts with host complement protein C3.

It is found in the secreted. In terms of biological role, extracellular fibrinogen-binding protein that plays an important role in virulence. By interacting with the alpha chain of fibrinogen and its derivative fibrin, enhances a non-functional interaction between fibrinogen and platelets and is responsible for repression of fibrinogen-dependent platelet aggregation. In addition, assembles a fibrinogen protective shield around the bacteria which results in impaired phagocytic clearance by the host. Mechanistically, interacts with host complement C3b deposited on the surface of the bacterium via its C-terminal and then recruits fibrinogen via its N-terminal. The protein is Fibrinogen-binding protein (fib) of Staphylococcus aureus.